Reading from the N-terminus, the 18141-residue chain is Titin (18141 aa).

Low complexity predominate over residues 1–31; sequence MQRQNPNPYQQQNQQHQQVQQFSSQEYSHSS. Positions 1 to 69 are disordered; that stretch reads MQRQNPNPYQ…QHHGGSIGGA (69 aa). Basic and acidic residues predominate over residues 32 to 47; sequence QEQHQEQRISRTEQHV. Over residues 48-62 the composition is skewed to low complexity; that stretch reads QRSQVTTQRQVQQHH. 17 Ig-like domains span residues 86 to 177, 255 to 343, 372 to 461, 471 to 559, 618 to 708, 751 to 842, 890 to 981, 1024 to 1115, 1158 to 1249, 1291 to 1381, 1424 to 1515, 1558 to 1643, 1691 to 1781, 1824 to 1917, 1958 to 2050, 2089 to 2180, and 2222 to 2313; these read PPVF…VYIQ, PQIS…AVLA, PAFV…AQLN, PQFV…ARLY, PQFI…AILS, PQFI…SSIR, PQFK…AQLT, PRFL…ATMI, PVFV…ACVR, PQFT…CSVR, PRFL…VELQ, PVFT…EAIT, PVFT…ASLI, PVFV…LNVT, PQFG…VNVT, PIFL…CNVR, and PHFT…TNLR. The tract at residues 236–266 is disordered; sequence EQDSQLSQELDRNQGPAQAPQISQKPRSSKL. The cysteines at positions 393 and 445 are disulfide-linked. 3 disulfide bridges follow: cysteine 1312/cysteine 1365, cysteine 1446/cysteine 1499, and cysteine 1579/cysteine 1632. A disulfide bond links cysteine 1846 and cysteine 1899. A disulfide bridge links cysteine 2111 with cysteine 2164. Residues 2338-2347 show a composition bias toward basic and acidic residues; it reads STAPHQRQEP. The tract at residues 2338–2357 is disordered; the sequence is STAPHQRQEPETPGTRQRPV. Ig-like domains are found at residues 2356–2449, 2488–2581, and 2622–2715; these read PVFT…MRVV, PIFT…MKVK, and PVFT…LKIE. Positions 2731-2750 are disordered; it reads PRIGELEAPKEGRPEAPEPT. Positions 2734–2746 are enriched in basic and acidic residues; sequence GELEAPKEGRPEA. Ig-like domains follow at residues 2754–2844, 2891–2983, 3029–3116, 3130–3221, 3263–3354, 3401–3494, 3539–3625, 3676–3767, and 3811–3901; these read PVFI…GTLK, PPVW…TTIF, PRFT…AEIS, PRFT…TTLN, PKFI…ASLK, PVFT…MKIQ, PEFI…ATVS, PKFT…AKVT, and PKFT…ATVS. An intrachain disulfide couples cysteine 2775 to cysteine 2828. Cysteine 3152 and cysteine 3205 form a disulfide bridge. Cystine bridges form between cysteine 3560/cysteine 3613, cysteine 3698/cysteine 3751, and cysteine 3832/cysteine 3885. A TPR 1 repeat occupies 3910–3944; that stretch reads LQNQVPRGMKRSDALTQMEATIKKYTSEVHLTEDD. Ig-like domains lie at 3954–4047 and 4092–4181; these read PRFV…IKVS and PVFV…LKVV. Cysteine 3976 and cysteine 4029 form a disulfide bridge. A coiled-coil region spans residues 4204–4229; that stretch reads AAYQKERQENELEKVFDERKQVLSEQ. Disordered regions lie at residues 4226–4254 and 4299–4336; these read LSEQSSHTLKGVEHLKPKQYKPPTPDWQQ and SSQAKGMAQSYEENLQEKTSTTEVQAAPPKGIAQPSES. Positions 4309–4322 are enriched in polar residues; the sequence is YEENLQEKTSTTEV. Ig-like domains lie at 4394 to 4482, 4497 to 4585, 4604 to 4692, and 4703 to 4791; these read PVFT…ANLV, PSFV…GDCI, PHIV…AQLK, and PTIT…AKLT. A TPR 2 repeat occupies 4403–4438; the sequence is CRVFENEQAKFEVEFEGEPNPTVKWYRESFPIQNSP. A disulfide bond links cysteine 4625 and cysteine 4676. Disordered stretches follow at residues 4803–4891, 5318–5368, 5413–5648, 5667–5701, 5718–5748, 5775–5982, 6034–6350, and 6364–6393; these read RTID…DKGV, DELV…QPEP, RVIP…EVDA, IKKTKRPKSTKEVTEELFEEQPEEEISPEEEVPQK, KKTKKPKLTQQVTEEETPHEEIIKESEEVVQ, KEEE…QRLL, KRVK…MPVD, and EEEVVPTEETPEAKQKAHKKRTKRLKEASV. Over residues 4822–4841 the composition is skewed to low complexity; the sequence is PESPHAFQPGQQPGQQFGQF. Basic residues predominate over residues 4852-4863; it reads GRSRQKKPKVRS. Composition is skewed to basic and acidic residues over residues 5344 to 5357, 5436 to 5447, 5541 to 5552, 5591 to 5621, and 5633 to 5645; these read QPQEKTFEEAHDEL, RPKEAVKAEEIQ, QKPDEQKQELPK, IEEKLDVAPTKTYEKAVDVLPDEPKVEEKPE, and PKSEPTEEVHPDE. Residues 5575–5613 form a TPR 3 repeat; it reads PVLWERKKKKPQPQDVIEEKLDVAPTKTYEKAVDVLPDE. Positions 5681–5697 are enriched in acidic residues; sequence EELFEEQPEEEISPEEE. Acidic residues-rich tracts occupy residues 5779-5792 and 5818-5860; these read IPTEETVEEEETAE and DVEE…QDEI. The segment covering 5865–5874 has biased composition (basic residues); it reads RKVKKAKKPK. A compositionally biased stretch (acidic residues) spans 5883–5904; it reads EIEEDQPEEEVLQEEIIGEQEE. Over residues 5910–5920 the composition is skewed to basic residues; the sequence is RKVKSIKKPKK. Over residues 5921 to 5971 the composition is skewed to basic and acidic residues; the sequence is VVTEKTVDQTEQPEKPEESQAEEVKETVTEEPKKPKPAPEEAKVEQVEKIS. Over residues 6034–6043 the composition is skewed to basic residues; sequence KRVKKKKPKT. Positions 6049–6079 are enriched in acidic residues; it reads ESTEEPAEETEEFEEEATQPEEVQPVEEIPE. 6 stretches are compositionally biased toward basic and acidic residues: residues 6081-6092, 6099-6133, 6141-6169, 6195-6209, 6217-6234, and 6259-6268; these read PQVKEVADERKT, RKEEIIEKVEEVALKRVTRPKKELPQEATIEEVRL, IKPEEVKLEEVDLQHVEKKEDEIVQEEKR, EAEHIELEKQPKPEE, KRGEKKQPVEEVLEEKKW, and PIEEQQKPEK. Over residues 6281–6290 the composition is skewed to acidic residues; the sequence is PESEEEELEL. A compositionally biased stretch (basic and acidic residues) spans 6291–6306; it reads EPLKLPEDKKPKEPKA. A compositionally biased stretch (basic residues) spans 6307 to 6318; sequence KKEKKKKPKLKK. Composition is skewed to acidic residues over residues 6325–6349 and 6364–6373; these read EVSEEVAEPFDEPIAEEDEVEEMPV and EEEVVPTEET. 7 consecutive Ig-like domains span residues 6536–6624, 6633–6728, 6741–6830, 6841–6929, 6942–7034, 7066–7151, and 7189–7279; these read PRIT…TNII, PQFT…NILS, PTVT…VVVS, PRFI…ATVN, PRFV…VKIQ, PKII…VAVT, and PSLL…FDIS. A disulfide bridge links cysteine 6557 with cysteine 6608. A disulfide bridge connects residues cysteine 6964 and cysteine 7016. Residues 7621 to 7663 adopt a coiled-coil conformation; it reads KIQVQTKQIAQMNTKIKKHKKHKQQEQEVSETTIQCEQKETLA. 29 disordered regions span residues 7773–7793, 9414–9440, 9485–9510, 9556–9582, 9627–9652, 9698–9724, 9769–9796, 9838–9865, 9911–9937, 9982–10008, 10053–10080, 10125–10149, 10195–10220, 10266–10291, 10337–10364, 10408–10433, 10479–10504, 10550–10576, 10621–10648, 10692–10717, 10763–10788, 10834–10860, 10905–10932, 11047–11073, 11118–11143, 11189–11216, 11260–11286, 11679–11703, and 11767–11795; these read AKTAESSKELPSKIPKSVKAQ, EEDDKQPETTVTVEEVPYEEEKPEEIQ, EEDDKQPETTVTVEEVPYEEEKPEEI, EEDDKQPETTVTVEEVPYEEEKPEEIQE, TAEEDDKQPETTVTVEEVPYEEEKPEEI, ENDKQPETTVTVEEVPYEEEKPEEI, EEDDKQPKTTVTVEEVPYEEEKPEEI, EELDENKKPKKKTTKTRTFKKRGPD, and TEPEEASADALQKPTKDKTPKQKKTLETP. The span at 7774–7783 shows a compositional bias: basic and acidic residues; sequence KTAESSKELP. Acidic residues-rich tracts occupy residues 9429 to 9440, 9500 to 9510, 9571 to 9582, 9642 to 9652, 9713 to 9724, 9784 to 9796, 9855 to 9865, 9926 to 9937, 9997 to 10008, 10068 to 10080, 10139 to 10149, 10210 to 10220, 10281 to 10291, 10352 to 10364, 10423 to 10433, 10494 to 10504, 10565 to 10576, 10636 to 10648, 10707 to 10717, 10778 to 10788, 10849 to 10860, 10920 to 10932, 11062 to 11073, 11133 to 11143, 11204 to 11216, and 11275 to 11286; these read VPYEEEKPEEIQ, VPYEEEKPEEI, and VPYEEEKPEEIQE. Positions 11686 to 11699 are enriched in basic residues; the sequence is KPKKKTTKTRTFKK. A compositionally biased stretch (basic and acidic residues) spans 11780-11792; it reads PTKDKTPKQKKTL. The TPR 4 repeat unit spans residues 11872–11905; it reads KTVLQPYQRTEMELPQRARRDSSFKQPVKLTPMK. Disordered stretches follow at residues 12003-12201, 12451-12471, 12685-12767, 12943-12971, 13131-13154, 13325-13349, 13471-13492, 13554-13576, 13702-13792, 13891-13914, 13951-13994, 14073-14094, 14109-14322, 14354-14377, 14414-14448, 14533-14566, 14583-14720, and 14756-14789; these read FKHS…ADTK, TLQVGVTEHEPTKKLKTKKPE, TVDD…LPGP, IDHENAEEAPKVLKSKVSEEKPKSKKEKS, IKKKKVSPKHGPKEQVFEITETRP, QSFESPEPTEGEAHETKTKTKKPKK, EEYEPTEMDSKKKPKKKVKSHN, EADKPIKQPTQDQPIKKEKPLKK, KVQK…KSPD, EEVQEKSKEAPEEKKAKTVRKAKK, MKRK…DEPK, TTVPTETPDQDQPSVKQKRTKK, EEEA…QVTT, EYEPEPVNQDEKPKEPKKKTRKVK, PLDSPIDVLDESPKEVQKKDKKSRSTKVPNEETPV, EPEIASPQSIEEHPEQSKEKLAPKPKKTVRKVKK, KVDL…SELP, and VEESQPIVEEVEDEEPQPATEETVEDVTKPKSKK. Basic and acidic residues-rich tracts occupy residues 12022 to 12035, 12044 to 12054, 12124 to 12134, 12183 to 12201, 12457 to 12471, and 12685 to 12709; these read ESDHSDKSNKELLH, EKIETPDESRK, MERTSDIREES, LNLRKRQGERPDDDKADTK, TEHEPTKKLKTKKPE, and TVDDVRVPKDKKKKIDNQKKIKISE. Positions 12731 to 12741 are enriched in acidic residues; the sequence is HDEDLQTDEYS. Positions 12750 to 12760 are enriched in basic residues; the sequence is KSKKKSTKKQK. Residues 13141–13154 are compositionally biased toward basic and acidic residues; it reads GPKEQVFEITETRP. Basic residues predominate over residues 13482 to 13492; the sequence is KKPKKKVKSHN. One copy of the TPR 5 repeat lies at 13566–13599; that stretch reads QPIKKEKPLKKKKDVEYPVSLEAFDHTVKVVSEP. Residues 13733 to 13747 are compositionally biased toward basic and acidic residues; the sequence is LVKEDLDQPIERALE. Residues 13771–13781 show a composition bias toward basic residues; the sequence is PKPKKISKPKS. Basic and acidic residues-rich tracts occupy residues 13893–13906 and 13975–13984; these read VQEKSKEAPEEKKA and EDKPVEKISE. The span at 14221 to 14240 shows a compositional bias: basic and acidic residues; sequence TVEKPLEALHTDSDLEKPDV. Positions 14264–14274 are enriched in low complexity; sequence KISSEQPKQPS. A compositionally biased stretch (basic and acidic residues) spans 14282-14294; it reads VTEHDLKPEEEKP. Positions 14542 to 14554 are enriched in basic and acidic residues; the sequence is IEEHPEQSKEKLA. The span at 14555–14564 shows a compositional bias: basic residues; the sequence is PKPKKTVRKV. Residues 14583–14599 show a composition bias toward basic and acidic residues; that stretch reads KVDLEKYEKVEMPEKPV. Positions 14652–14662 are enriched in low complexity; that stretch reads ETTVDTTDIPE. Residues 14664–14683 are compositionally biased toward polar residues; it reads TPTQTAQPEDTATAQITPSA. Positions 14684–14697 are enriched in basic and acidic residues; that stretch reads QEEKSTQDDTKDTI. The span at 14756 to 14771 shows a compositional bias: acidic residues; it reads VEESQPIVEEVEDEEP. A TPR 6 repeat occupies 14904 to 14936; that stretch reads IPKTTDIGAIKDNGELSRNIEEAEEILKFKPHK. Disordered regions lie at residues 14956–15208, 15301–15329, 15425–15448, 15578–15597, 15697–15722, 15825–15876, 15951–15973, and 16181–16206; these read EKYI…VSVK, TRKKKPKPQQPEEFEVTLKEPKEEQIQPD, ISETQSIEEKPIEVAEEAPEETPK, IRVSESEPKPEEPSVEQFTV, EKPAEAIVEEEEPVVTEPIEEAPKPE, EEPK…VEEP, ESQPEAVEDKEVSLPKKKPKAPI, and QEEEYEEGEDIEEFVVSQQRKPKPLQ. Composition is skewed to basic and acidic residues over residues 14967 to 14989, 15024 to 15046, 15069 to 15080, 15088 to 15097, 15109 to 15139, 15169 to 15179, 15189 to 15198, 15316 to 15325, 15425 to 15437, and 15578 to 15589; these read EKTPYKKPEKAPKPEEKQEDVKL, ELKQKPKEVEIVEEQTKKPKDGE, QIEHPEIPEKVK, KPKDKSKSEP, PKEEEAIPEQDVKFRKPERDAPEETDSEIKL, IEDKAIDDEKK, QPKEQEIAKE, VTLKEPKEEQ, ISETQSIEEKPIE, and IRVSESEPKPEE. A compositionally biased stretch (acidic residues) spans 15703–15716; that stretch reads IVEEEEPVVTEPIE. The segment covering 15951–15964 has biased composition (basic and acidic residues); that stretch reads ESQPEAVEDKEVSL. Over residues 16183–16193 the composition is skewed to acidic residues; that stretch reads EEYEEGEDIEE. In terms of domain architecture, SH3 spans 16409–16470; sequence ENLNIMYSIC…PAQYLMEPEE (62 aa). Ig-like domains are found at residues 16501-16590, 16625-16719, 16728-16811, 16822-16916, 16919-17001, 17007-17091, 17097-17180, 17184-17270, and 17277-17363; these read PRFI…TELI, PTFS…ITLK, PQIL…ANLT, PPLF…VEVD, TFTK…STVE, PDFI…CELV, PEIV…AKLT, PLVD…TKLC, and PPVI…AEAS. Cysteine 16940 and cysteine 16989 form a disulfide bridge. Residues 17374–17467 enclose the Fibronectin type-III 1 domain; sequence APGTPQPLEI…LSPPIRLVPK (94 aa). Ig-like domains lie at 17473 to 17558 and 17563 to 17653; these read PSVQ…CRLK and PVLE…CTVQ. Cysteine 17494 and cysteine 17542 form a disulfide bridge. 4 consecutive Fibronectin type-III domains span residues 17660 to 17755, 17760 to 17861, 17862 to 17958, and 17982 to 18078; these read RPQS…TKKF, PPRG…TPPS, PPQN…THAS, and PPTG…AMTA. One copy of the TPR 7 repeat lies at 17694–17728; it reads LEKCDVQNNVWMKVSDFNKDIKSYAVQKLSMNAQY. The segment at 17741 to 17771 is disordered; sequence SEPTESDPVTITKKFEKPSPPRGPTTVSGMN.

Belongs to the protein kinase superfamily. CAMK Ser/Thr protein kinase family. Interacts with Msp300; this interaction mediates the recruitment of Msp300 to the Z-disks. As to expression, expressed in the mesoderm at stage 11, several hours before myoblast fusion, and persists in most muscle cells, somatic, visceral and pharyngeal muscles and their precursors, until the third instar. Isoform A: Expressed in the indirect flight muscle (at protein level).

It localises to the cytoplasm. Its subcellular location is the nucleus. The protein resides in the chromosome. The protein localises to the myofibril. It is found in the sarcomere. It localises to the z line. Key component in the assembly and functioning of adult and embryonic striated muscles and muscle tendons. By providing connections at the level of individual microfilaments, it contributes to the fine balance of forces between the two halves of the sarcomere. The size and extensibility of the cross-links are the main determinants of sarcomere extensibility properties of muscle. In non-muscle cells, seems to play a role in chromosome condensation and chromosome segregation during mitosis. Might link the lamina network to chromatin or nuclear actin, or both during interphase. This is Titin (sls) from Drosophila melanogaster (Fruit fly).